A 348-amino-acid chain; its full sequence is Methylthioribose-1-phosphate isomerase (348 aa).

Substrate contacts are provided by residues 53–55, R93, and Q197; that span reads RGA. D238 serves as the catalytic Proton donor. A substrate-binding site is contributed by 248 to 249; it reads NK.

Belongs to the eIF-2B alpha/beta/delta subunits family. MtnA subfamily.

The catalysed reaction is 5-(methylsulfanyl)-alpha-D-ribose 1-phosphate = 5-(methylsulfanyl)-D-ribulose 1-phosphate. It functions in the pathway amino-acid biosynthesis; L-methionine biosynthesis via salvage pathway; L-methionine from S-methyl-5-thio-alpha-D-ribose 1-phosphate: step 1/6. Catalyzes the interconversion of methylthioribose-1-phosphate (MTR-1-P) into methylthioribulose-1-phosphate (MTRu-1-P). The chain is Methylthioribose-1-phosphate isomerase from Gloeobacter violaceus (strain ATCC 29082 / PCC 7421).